We begin with the raw amino-acid sequence, 617 residues long: MRIGLLAFAVAARYVEALPVASGEEVASSSAPTTLPSTSSSSALPSPTKYTLPHEDPNPEARKAEIALKRGGFLYGPSTLGQTTFYPSGTLGTAMSQRDQALWLRDAENQTITAYREANETLRDIQSHGGLKTLDDFALLYDGHWKASVPEGIEKGMLSNYTSDLLFSMERLSNNPYSLKRLHPTKDKLPFSVEDKVVKQLTATTLAALHKAGRLFFVDHSDQKKYTPQAGRYAAACQGLFYVDARSNQFLPLAIKTNVGADLTYTPLDDKNDWLLAKIMFNNNDLFYSQMYHVLFHTVPEIVHMAAIRTLSESHPVLAVLNRIMYQAYAIRPVGERILFNPGGFWDQNLGLPATAAVDFLSSIYAHGEGGFRAGYVENNLRKRGLVGDTFGGPALPHFPFYEDAQRVLGAIRGFMQAFVDSTYGGDDGALARDFELQDWVAEANGPAQVRDFPTAPLRRREELVGILTHIAWNTGGAHHVLNQGAPVRASGVLPLHPAALYAPVPAAKGAVASSDGLLAWLPDEVKSVEQVSLLARFNRAQVRDRNQTVRNMFAAPELLAGNGEAYAAANARFVEETGRISREIEGRGFDSKGLSQGMPFIWTALNPAVNPFFLSI.

The N-terminal stretch at 1-17 (MRIGLLAFAVAARYVEA) is a signal peptide. The segment covering 23-48 (GEEVASSSAPTTLPSTSSSSALPSPT) has biased composition (low complexity). The tract at residues 23–59 (GEEVASSSAPTTLPSTSSSSALPSPTKYTLPHEDPNP) is disordered. N-linked (GlcNAc...) asparagine glycosylation is found at N109, N119, and N160. Residues 122–617 (LRDIQSHGGL…PAVNPFFLSI (496 aa)) form the Lipoxygenase domain. H293, H297, H479, and N483 together coordinate Mn(2+). N547 is a glycosylation site (N-linked (GlcNAc...) asparagine). I617 is a binding site for Mn(2+).

It belongs to the lipoxygenase family. Manganese lipoxygenase subfamily. Requires Mn(2+) as cofactor.

It is found in the secreted. The catalysed reaction is (9Z,12Z)-octadecadienoate + O2 = (9S)-hydroperoxy-(10E,12Z)-octadecadienoate. The enzyme catalyses (9Z,12Z)-octadecadienoate + O2 = (11S)-hydroperoxy-(9Z,12Z)-octadecadienoate. It carries out the reaction (9Z,12Z)-octadecadienoate + O2 = (13R)-hydroperoxy-(9Z,11E)-octadecadienoate. It catalyses the reaction (9Z,12Z,15Z)-octadecatrienoate + O2 = (9S)-hydroperoxy-(10E,12Z,15Z)-octadecatrienoate. The catalysed reaction is (9Z,12Z,15Z)-octadecatrienoate + O2 = (11R)-hydroperoxy-(9Z,12Z,15Z)-octadecatrienoate. The enzyme catalyses (9Z,12Z,15Z)-octadecatrienoate + O2 = (13R)-hydroperoxy-(9Z,11E,15Z)-octadecatrienoate. Functionally, lipoxygenase that metabolizes linoleic and alpha-linolenic acids to 9S-, 11- and 13R-hydroperoxy fatty acids. At the end of lipoxygenation, the intermediate products 11S-HPODE and 13R-HPODE from linoleic acid are then transformed into 9S-HPODE as the final product. The intermediate product 11R-HPOTrE from alpha-linolenic acid is transformed into 9S-HPOTrE and 13R-HPOTrE as the final products. 9S-HPOTrE is further oxidized by the enzyme to 9,16-DiHOTrE as the end product. Also acts on gamma-linolenic acid producing 9-HOTrE(n-6) as the main metabolite. In Nakataea oryzae (Rice stem rot fungus), this protein is Manganese lipoxygenase.